The primary structure comprises 531 residues: MVDVGKWPIFTLLSPQEAGSIRKACVFGTSANEAIYVTDNDEVFVFGLNYSNCLGTGDNQSTLVPKKLEALCGKKIKSLSYGSGPHVLLTTEDGVVYAWGHNGYSQLGNGTTNQGIAPVQVCTNLLIKQVIEVACGSHHSMALAADGELFAWGYNNCGQVGSGSTANQPTPRKVTNCLHTKRVVNIACGQTSSMAVLDSGEVYGWGYNGNGQLGLGNNGNQLTPVRVAALHGMCVNQIVCGYAHTLALTDEGLLYAWGANTYGQLGTGSKNNLLSPTQIMVEKERVIEIAACHSTHTSAAKTQGGHVYMWGQCRGQSVILPHLTHFCCTDDVFACFGTPAVSWRLLSVEHEDFLTVAESLKKEFDSPEIADLKFRIDGKYIHVHKAVLKIRCEHFRSMFQSYWNEDMKEVIEIDQFSYPVYRAFLQYLYTDTVDLPPEDAIGLLDLATSYCENRLKRLCQHIIKRGITVENAFSLFSAAVRYDAEDLEEFCFKFCINHLTEVTQTAAFWQMDGPLLKEFIAKASKCGAFKN.

RCC1 repeat units follow at residues 40–91 (NDEV…LLTT), 93–145 (DGVV…ALAA), 147–198 (GELF…AVLD), 199–250 (SGEV…ALTD), 252–302 (GLLY…AAKT), and 304–356 (GGHV…FLTV). BTB domains lie at 370-437 (ADLK…DLPP) and 470-499 (ENAF…INHL).

As to expression, in the retina, mainly expressed in the inner retina with strong signals reaching up to the outer plexiform layer (at protein level).

The protein resides in the nucleus. In terms of biological role, may be involved in cell cycle regulation by chromatin remodeling. This is RCC1 and BTB domain-containing protein 1 (Rcbtb1) from Mus musculus (Mouse).